The chain runs to 434 residues: ATP-dependent RNA helicase RhlB (434 aa).

The short motif at 9 to 37 (QKFADLGLEPQVLDGLNAKGFINCTPIQA) is the Q motif element. The region spanning 40–219 (LPVLLAGQDI…FEHMQEPEHV (180 aa)) is the Helicase ATP-binding domain. 53–60 (AQTGTGKT) contributes to the ATP binding site. A DEAD box motif is present at residues 165–168 (DEAD). The 146-residue stretch at 245-390 (ALLQTLIEEE…QSDYDTSALL (146 aa)) folds into the Helicase C-terminal domain. The segment at 394–434 (PAPIRLQRRPPQNRRNGSNNGQRQSGNRKHSRPRPPRSPQA) is disordered. Low complexity predominate over residues 406–418 (NRRNGSNNGQRQS). Basic residues predominate over residues 419 to 428 (GNRKHSRPRP).

Belongs to the DEAD box helicase family. RhlB subfamily. Component of the RNA degradosome, which is a multiprotein complex involved in RNA processing and mRNA degradation.

The protein localises to the cytoplasm. The enzyme catalyses ATP + H2O = ADP + phosphate + H(+). Functionally, DEAD-box RNA helicase involved in RNA degradation. Has RNA-dependent ATPase activity and unwinds double-stranded RNA. This Aliivibrio salmonicida (strain LFI1238) (Vibrio salmonicida (strain LFI1238)) protein is ATP-dependent RNA helicase RhlB.